A 503-amino-acid chain; its full sequence is SusD-like protein P38 (503 aa).

Positions methionine 1–asparagine 21 are cleaved as a signal peptide.

It belongs to the SusD family.

It is found in the cell outer membrane. Functionally, polysaccharide-binding protein probably involved in ulvan degradation. Ulvan is the main polysaccharide component of the Ulvales (green seaweed) cell wall. It is composed of disaccharide building blocks comprising 3-sulfated rhamnose (Rha3S) linked to D-glucuronic acid (GlcA), L-iduronic acid (IduA), or D-xylose (Xyl). The SusD-like protein may mediate ulvan oligomer-binding before transport in the periplasm for further degradation. The sequence is that of SusD-like protein P38 from Formosa agariphila (strain DSM 15362 / KCTC 12365 / LMG 23005 / KMM 3901 / M-2Alg 35-1).